The chain runs to 488 residues: MSGEMDKPLISRRLVDSDGSLAEVPKEAPKVGILGSGDFARSLATRLVGSGFSVVVGSRNPKRTAGLFPSLAQVTFQEEAVSSPEVIFVAVFREHYSSLCSLADQLAGKILVDVSNPTEKERLQHRQSNAEYLASLFPACTVVKAFNVISAWALQAGPRDGNRQVLICGDQLEAKHTVSEMARAMGFTPLDMGSLASAREVEAIPLRLLPSWKVPTLLALGLFVCFYAYNFIRDVLQPYIRKDENKFYKMPLSVVNTTLPCVAYVLLSLVYLPGVLAAALQLRRGTKYQRFPDWLDHWLQHRKQIGLLSFFFAMLHALYSFCLPLRRSHRYDLVNLAVKQVLANKSRLWVEEEVWRMEIYLSLGVLALGMLSLLAVTSIPSIANSLNWKEFSFVQSTLGFVALMLSTMHTLTYGWTRAFEENHYKFYLPPTFTLTLLLPCVIILAKGLFLLPCLSHRLTKIRRGWERDGAVKFMLPAGHTQGEKTSHV.

At 1-207 (MSGEMDKPLI…AREVEAIPLR (207 aa)) the chain is on the cytoplasmic side. Residues serine 11, serine 17, and serine 20 each carry the phosphoserine modification. Residues 36-39 (SGDF), 58-59 (SR), 91-98 (VFREHYSS), asparagine 116, and alanine 151 each bind NADP(+). FAD-binding residues include tryptophan 152 and aspartate 160. A helical transmembrane segment spans residues 208 to 228 (LLPSWKVPTLLALGLFVCFYA). Tyrosine 229 serves as a coordination point for Fe(3+). The Vesicular portion of the chain corresponds to 229 to 258 (YNFIRDVLQPYIRKDENKFYKMPLSVVNTT). Asparagine 256 carries an N-linked (GlcNAc...) asparagine glycan. A helical membrane pass occupies residues 259 to 279 (LPCVAYVLLSLVYLPGVLAAA). A Ferric oxidoreductase domain is found at 259–407 (LPCVAYVLLS…LGFVALMLST (149 aa)). Over 280 to 304 (LQLRRGTKYQRFPDWLDHWLQHRKQ) the chain is Cytoplasmic. 3 residues coordinate FAD: glutamine 281, arginine 302, and lysine 303. A helical membrane pass occupies residues 305 to 325 (IGLLSFFFAMLHALYSFCLPL). Histidine 316 serves as a coordination point for heme b. Tyrosine 319 is a binding site for Fe(3+). The Vesicular segment spans residues 326–358 (RRSHRYDLVNLAVKQVLANKSRLWVEEEVWRME). The helical transmembrane segment at 359-379 (IYLSLGVLALGMLSLLAVTSI) threads the bilayer. FAD is bound at residue serine 378. Residues 380 to 390 (PSIANSLNWKE) lie on the Cytoplasmic side of the membrane. The chain crosses the membrane as a helical span at residues 391 to 411 (FSFVQSTLGFVALMLSTMHTL). Residue glutamine 395 participates in FAD binding. Histidine 409 contacts heme b. At 412 to 433 (TYGWTRAFEENHYKFYLPPTFT) the chain is on the vesicular side. Residues 434–454 (LTLLLPCVIILAKGLFLLPCL) form a helical membrane-spanning segment. Topologically, residues 455 to 488 (SHRLTKIRRGWERDGAVKFMLPAGHTQGEKTSHV) are cytoplasmic. At serine 486 the chain carries Phosphoserine.

The protein belongs to the STEAP family. As to quaternary structure, homodimer. Interacts with BNIP3L, MYT1, RHBDL4/RHBDD1 and TCTP. FAD is required as a cofactor. It depends on heme b as a cofactor. In terms of processing, proteolytically cleaved by RHBDL4/RHBDD1. RHBDL4/RHBDD1-induced cleavage occurs at multiple sites in a glycosylation-independent manner. Post-translationally, glycosylated.

The protein localises to the endosome membrane. The catalysed reaction is 2 Fe(2+) + NADP(+) + H(+) = 2 Fe(3+) + NADPH. The enzyme catalyses 2 Cu(+) + NADP(+) + H(+) = 2 Cu(2+) + NADPH. Integral membrane protein that functions as a NADPH-dependent ferric-chelate reductase, using NADPH from one side of the membrane to reduce a Fe(3+) chelate that is bound on the other side of the membrane. Mediates sequential transmembrane electron transfer from NADPH to FAD and onto heme, and finally to the Fe(3+) chelate. Can also reduce Cu(2+) to Cu(1+). Mediates efficient transferrin-dependent iron uptake in erythroid cells. May play a role downstream of p53/TP53 to interface apoptosis and cell cycle progression. Indirectly involved in exosome secretion by facilitating the secretion of proteins such as TCTP. The polypeptide is Metalloreductase STEAP3 (Steap3) (Rattus norvegicus (Rat)).